A 201-amino-acid chain; its full sequence is NADH-ubiquinone oxidoreductase chain 6 (201 aa).

The next 5 membrane-spanning stretches (helical) occupy residues 4-24, 28-48, 55-75, 88-108, and 151-171; these read LVLF…VISV, VFSV…LLLL, LLFL…VVMI, FYYA…IFII, and LFIL…ILTL.

It belongs to the complex I subunit 6 family.

It is found in the mitochondrion membrane. The catalysed reaction is a ubiquinone + NADH + 5 H(+)(in) = a ubiquinol + NAD(+) + 4 H(+)(out). Functionally, core subunit of the mitochondrial membrane respiratory chain NADH dehydrogenase (Complex I) that is believed to belong to the minimal assembly required for catalysis. Complex I functions in the transfer of electrons from NADH to the respiratory chain. The immediate electron acceptor for the enzyme is believed to be ubiquinone. This chain is NADH-ubiquinone oxidoreductase chain 6 (ND6), found in Cyanidium caldarium (Red alga).